The primary structure comprises 268 residues: Orotidine 5'-phosphate decarboxylase (268 aa).

Substrate contacts are provided by residues aspartate 38, 60–62 (KTH), 92–101 (DRKFADIGNT), tyrosine 218, and arginine 236. Lysine 94 serves as the catalytic Proton donor.

It belongs to the OMP decarboxylase family.

The catalysed reaction is orotidine 5'-phosphate + H(+) = UMP + CO2. Its pathway is pyrimidine metabolism; UMP biosynthesis via de novo pathway; UMP from orotate: step 2/2. This Candida tropicalis (Yeast) protein is Orotidine 5'-phosphate decarboxylase (URA3).